We begin with the raw amino-acid sequence, 938 residues long: Inner tegument protein (938 aa).

The interval 457–938 (EIVDLLFSST…LVEPLLLKLG (482 aa)) is interaction with large tegument protein.

This sequence belongs to the herpesviridae inner tegument protein family. In terms of assembly, interacts (via C-terminus) with the large tegument protein/LTP (via N-terminus).

It localises to the virion tegument. Its subcellular location is the host cytoplasm. The protein localises to the host nucleus. The protein resides in the host Golgi apparatus. It is found in the host trans-Golgi network. In terms of biological role, plays an essential role in cytoplasmic secondary envelopment during viral egress. Interacts with the capsid via the large tegument protein/LTP and participates in its transport to the host trans-Golgi network (TGN) where secondary envelopment occurs. Modulates tegumentation and capsid accumulation at the viral assembly complex. This is Inner tegument protein (U30) from Human herpesvirus 7 (strain JI) (HHV-7).